The following is an 88-amino-acid chain: Protein Aeq5-like1 (88 aa).

Positions Met-1 to Ala-20 are cleaved as a signal peptide. 4 disulfides stabilise this stretch: Cys-29–Cys-68, Cys-33–Cys-64, Cys-40–Cys-56, and Cys-47–Cys-53.

As to expression, is expressed in the ectodermal cells of gastrulae and planulae. Is also noticeable in the endoderm in late planulae. In the primary polyps, is expressed in both ectoderm (sensory neurons) and endoderm (ganglions). Is not expressed in nematocytes.

Its function is as follows. Probable neuropeptide. In Nematostella vectensis (Starlet sea anemone), this protein is Protein Aeq5-like1.